A 565-amino-acid polypeptide reads, in one-letter code: Sodium/hydrogen exchanger 9B1 (565 aa).

Basic and acidic residues-rich tracts occupy residues 1–14 (MSEH…KDDG) and 23–86 (MSKD…ETQT). Positions 1-112 (MSEHDVESNK…RGTNSYCPPQ (112 aa)) are disordered. The next 13 membrane-spanning stretches (helical) occupy residues 122 to 142 (GAAL…EVLP), 146 to 166 (LFGL…LEFI), 167 to 187 (KIPV…GFTI), 206 to 223 (ALRN…GLGL), 238 to 258 (LSFG…HFIM), 266 to 286 (FLLG…NMLM), 311 to 331 (IVAI…GSVI), 341 to 361 (VLIG…FPSG), 371 to 391 (AFLV…IGLH), 419 to 439 (IVAN…GTEV), 449 to 469 (IGMC…STFV), 482 to 502 (VFIA…GPLA), and 523 to 543 (VAFL…GILG).

The protein belongs to the monovalent cation:proton antiporter 1 (CPA1) transporter (TC 2.A.36) family. As to expression, testis-specific. Expressed in the spermatids and spermatozoa (at protein level). Specifically present in the principal piece of sperm tail (at protein level).

The protein resides in the cell projection. It localises to the cilium. The protein localises to the flagellum membrane. Its function is as follows. Sperm-specific Na(+)/H(+) exchanger involved in intracellular pH regulation of spermatozoa. Involved in sperm motility and fertility. The protein is Sodium/hydrogen exchanger 9B1 of Mus musculus (Mouse).